Reading from the N-terminus, the 125-residue chain is Large ribosomal subunit protein bL19 (125 aa).

The protein belongs to the bacterial ribosomal protein bL19 family.

This protein is located at the 30S-50S ribosomal subunit interface and may play a role in the structure and function of the aminoacyl-tRNA binding site. The polypeptide is Large ribosomal subunit protein bL19 (Ehrlichia chaffeensis (strain ATCC CRL-10679 / Arkansas)).